The chain runs to 70 residues: DNA-directed RNA polymerase subunit omega (70 aa).

It belongs to the RNA polymerase subunit omega family. In terms of assembly, the RNAP catalytic core consists of 2 alpha, 1 beta, 1 beta' and 1 omega subunit. When a sigma factor is associated with the core the holoenzyme is formed, which can initiate transcription.

The catalysed reaction is RNA(n) + a ribonucleoside 5'-triphosphate = RNA(n+1) + diphosphate. Promotes RNA polymerase assembly. Latches the N- and C-terminal regions of the beta' subunit thereby facilitating its interaction with the beta and alpha subunits. The sequence is that of DNA-directed RNA polymerase subunit omega from Shouchella clausii (strain KSM-K16) (Alkalihalobacillus clausii).